Here is a 558-residue protein sequence, read N- to C-terminus: Dihydroxy-acid dehydratase (558 aa).

Aspartate 78 is a binding site for Mg(2+). Cysteine 119 provides a ligand contact to [2Fe-2S] cluster. Positions 120 and 121 each coordinate Mg(2+). Lysine 121 carries the post-translational modification N6-carboxylysine. Cysteine 192 is a binding site for [2Fe-2S] cluster. Glutamate 446 contacts Mg(2+). Serine 472 acts as the Proton acceptor in catalysis.

It belongs to the IlvD/Edd family. In terms of assembly, homodimer. [2Fe-2S] cluster is required as a cofactor. It depends on Mg(2+) as a cofactor.

The enzyme catalyses (2R)-2,3-dihydroxy-3-methylbutanoate = 3-methyl-2-oxobutanoate + H2O. It catalyses the reaction (2R,3R)-2,3-dihydroxy-3-methylpentanoate = (S)-3-methyl-2-oxopentanoate + H2O. It participates in amino-acid biosynthesis; L-isoleucine biosynthesis; L-isoleucine from 2-oxobutanoate: step 3/4. Its pathway is amino-acid biosynthesis; L-valine biosynthesis; L-valine from pyruvate: step 3/4. Its function is as follows. Functions in the biosynthesis of branched-chain amino acids. Catalyzes the dehydration of (2R,3R)-2,3-dihydroxy-3-methylpentanoate (2,3-dihydroxy-3-methylvalerate) into 2-oxo-3-methylpentanoate (2-oxo-3-methylvalerate) and of (2R)-2,3-dihydroxy-3-methylbutanoate (2,3-dihydroxyisovalerate) into 2-oxo-3-methylbutanoate (2-oxoisovalerate), the penultimate precursor to L-isoleucine and L-valine, respectively. The chain is Dihydroxy-acid dehydratase from Campylobacter jejuni subsp. jejuni serotype O:23/36 (strain 81-176).